A 362-amino-acid chain; its full sequence is Probable S-adenosylmethionine-dependent methyltransferase At5g37990 (362 aa).

The S-adenosyl-L-homocysteine site is built by Tyr-19, Cys-66, Asn-71, Asp-107, Ser-136, and Phe-137. Residues Asn-175, Glu-261, and Phe-263 each contribute to the Mg(2+) site.

This sequence belongs to the methyltransferase superfamily. Type-7 methyltransferase family. In terms of assembly, homodimer. Mg(2+) serves as cofactor.

In Arabidopsis thaliana (Mouse-ear cress), this protein is Probable S-adenosylmethionine-dependent methyltransferase At5g37990.